A 45-amino-acid chain; its full sequence is MESIMSLKRKEKKSQSRRLGKYLKEQKGRIYIIRRCVMMLLCSHD.

The interval 14-45 (SQSRRLGKYLKEQKGRIYIIRRCVMMLLCSHD) is required for DVL/RTFL small polypeptide activity. The chain crosses the membrane as a helical span at residues 17-33 (RRLGKYLKEQKGRIYII).

Belongs to the DVL/RTFL small polypeptides family. Mostly expressed in stems and, to a lower extent, in roots and leaves.

It is found in the cell membrane. Small polypeptide acting as a regulatory molecule which coordinates cellular responses required for differentiation, growth and development, including leaves shape, pedicule elongation, inflorescence organization and fruit maturation, probably by restricting polar cell proliferation in lateral organs and coordinating socket cell recruitment and differentiation at trichome sites. The sequence is that of Small polypeptide DEVIL 2 from Arabidopsis thaliana (Mouse-ear cress).